The following is a 347-amino-acid chain: (RS)-norcoclaurine 6-O-methyltransferase (347 aa).

S-adenosyl-L-methionine-binding residues include glycine 192, aspartate 215, aspartate 235, methionine 236, and lysine 249. Histidine 253 acts as the Proton acceptor in catalysis.

The protein belongs to the class I-like SAM-binding methyltransferase superfamily. Cation-independent O-methyltransferase family. COMT subfamily. In terms of assembly, homodimer.

The catalysed reaction is norcoclaurine + S-adenosyl-L-methionine = coclaurine + S-adenosyl-L-homocysteine + H(+). It functions in the pathway alkaloid biosynthesis; (S)-reticuline biosynthesis; (S)-reticuline from (S)-norcoclaurine: step 1/4. In terms of biological role, catalyzes the transfer of the S-methyl group of S-adenosyl-L-methionine (AdoMet) to the 6-hydroxyl group of norcoclaurine to form coclaurine. The protein is (RS)-norcoclaurine 6-O-methyltransferase of Coptis japonica (Japanese goldthread).